The chain runs to 385 residues: Ethanolamine kinase 2 (385 aa).

This sequence belongs to the choline/ethanolamine kinase family. In terms of tissue distribution, expressed in testis and liver. Low expression in ovary and kidney.

It carries out the reaction ethanolamine + ATP = phosphoethanolamine + ADP + H(+). It participates in phospholipid metabolism; phosphatidylethanolamine biosynthesis; phosphatidylethanolamine from ethanolamine: step 1/3. Functionally, highly specific for ethanolamine phosphorylation. Does not have choline kinase activity. In Mus musculus (Mouse), this protein is Ethanolamine kinase 2 (Etnk2).